The primary structure comprises 463 residues: ATP synthase subunit beta (463 aa).

Residue 152 to 159 (GGAGVGKT) participates in ATP binding.

It belongs to the ATPase alpha/beta chains family. F-type ATPases have 2 components, CF(1) - the catalytic core - and CF(0) - the membrane proton channel. CF(1) has five subunits: alpha(3), beta(3), gamma(1), delta(1), epsilon(1). CF(0) has three main subunits: a(1), b(2) and c(9-12). The alpha and beta chains form an alternating ring which encloses part of the gamma chain. CF(1) is attached to CF(0) by a central stalk formed by the gamma and epsilon chains, while a peripheral stalk is formed by the delta and b chains.

Its subcellular location is the cell inner membrane. It catalyses the reaction ATP + H2O + 4 H(+)(in) = ADP + phosphate + 5 H(+)(out). In terms of biological role, produces ATP from ADP in the presence of a proton gradient across the membrane. The catalytic sites are hosted primarily by the beta subunits. This chain is ATP synthase subunit beta, found in Shewanella baltica (strain OS223).